Reading from the N-terminus, the 310-residue chain is D-erythrulose 1-phosphate 3-epimerase (310 aa).

The catalysed reaction is D-erythrulose 1-phosphate = L-erythrulose 1-phosphate. Its pathway is carbohydrate metabolism; erythritol degradation. Functionally, catalyzes the racemization of D-erythrulose 1-phosphate to L-erythrulose 1-phosphate. This is D-erythrulose 1-phosphate 3-epimerase from Brucella abortus (strain 2308).